Consider the following 273-residue polypeptide: Zinc finger protein 80 (273 aa).

7 consecutive C2H2-type zinc fingers follow at residues 49–71 (YKCK…QQIH), 77–99 (YECQ…VRIH), 103–127 (KPCK…HQIH), 133–155 (YECS…RMTH), 161–183 (FGCK…MKIH), 189–211 (YKCS…SMTH), and 217–239 (YECK…TRSH).

The protein belongs to the krueppel C2H2-type zinc-finger protein family.

Its subcellular location is the nucleus. In terms of biological role, may be involved in transcriptional regulation. This chain is Zinc finger protein 80 (ZNF80), found in Pongo pygmaeus (Bornean orangutan).